The primary structure comprises 365 residues: Histidinol-phosphate aminotransferase (365 aa).

Lys-223 is modified (N6-(pyridoxal phosphate)lysine).

The protein belongs to the class-II pyridoxal-phosphate-dependent aminotransferase family. Histidinol-phosphate aminotransferase subfamily. Homodimer. It depends on pyridoxal 5'-phosphate as a cofactor.

The enzyme catalyses L-histidinol phosphate + 2-oxoglutarate = 3-(imidazol-4-yl)-2-oxopropyl phosphate + L-glutamate. Its pathway is amino-acid biosynthesis; L-histidine biosynthesis; L-histidine from 5-phospho-alpha-D-ribose 1-diphosphate: step 7/9. In Brucella abortus (strain 2308), this protein is Histidinol-phosphate aminotransferase.